Here is a 143-residue protein sequence, read N- to C-terminus: Nucleoside diphosphate kinase (143 aa).

Positions 11, 59, 87, 93, 104, and 114 each coordinate ATP. The active-site Pros-phosphohistidine intermediate is H117.

It belongs to the NDK family. In terms of assembly, homotetramer. Requires Mg(2+) as cofactor.

It is found in the cytoplasm. It carries out the reaction a 2'-deoxyribonucleoside 5'-diphosphate + ATP = a 2'-deoxyribonucleoside 5'-triphosphate + ADP. The enzyme catalyses a ribonucleoside 5'-diphosphate + ATP = a ribonucleoside 5'-triphosphate + ADP. Functionally, major role in the synthesis of nucleoside triphosphates other than ATP. The ATP gamma phosphate is transferred to the NDP beta phosphate via a ping-pong mechanism, using a phosphorylated active-site intermediate. This chain is Nucleoside diphosphate kinase, found in Shewanella piezotolerans (strain WP3 / JCM 13877).